The following is a 298-amino-acid chain: Enoyl-CoA hydratase AKT6-1 (298 aa).

The disordered stretch occupies residues 1-23 (MTFSTTKSVAMSPDDDAPSFDIN).

This sequence belongs to the enoyl-CoA hydratase/isomerase family.

The protein operates within mycotoxin biosynthesis. Its function is as follows. Enoyl-CoA hydratase; part of the gene clusters that mediate the biosynthesis of the host-selective toxins (HSTs) AK-toxins responsible for Japanese pear black spot disease by the Japanese pear pathotype. AK-toxins are esters of 9,10-epoxy 8-hydroxy 9-methyldecatrienoic acid (EDA). On cellular level, AK-toxins affect plasma membrane of susceptible cells and cause a sudden increase in loss of K(+) after a few minutes of toxin treatment. The acyl-CoA ligase AKT1, the hydrolase AKT2 and enoyl-CoA hydratase AKT3 are all involved in the biosynthesis of the AK-, AF- and ACT-toxin common 9,10-epoxy-8-hydroxy-9-methyl-decatrienoic acid (EDA) structural moiety. Part of the EDA biosynthesis occurs in the peroxisome since these 3 enzymes are localized in peroxisomes. The exact roles of the 3 enzymes, as well as of additional AK-toxin clusters enzymes, including AKT4, AKT6 and AKTS1, have still to be elucidated. The Cytochrome P450 monooxygenase AKT7 on the other side functions to limit production of EDA and AK-toxin, probably via the catalysis of a side reaction of EDA or its precursor. The sequence is that of Enoyl-CoA hydratase AKT6-1 from Alternaria alternata (Alternaria rot fungus).